A 144-amino-acid chain; its full sequence is Antigenic protein SchS21 (144 aa).

N36 carries an N-linked (GlcNAc...) asparagine glycan. An igE-binding epitope region spans residues 91–105 (VKQMWPAESRKPMSG).

In terms of assembly, homodimer. It depends on Mg(2+) as a cofactor.

Its subcellular location is the secreted. In terms of biological role, has exodeoxyribonuclease activity with lambda-DNA and salmon testes dsDNA. No activity with circular plasmid DNA. The physiological role of this enzyme may be to degrade environmental DNA, and thus mobilize nitrogen for uptake. This is Antigenic protein SchS21 from Stachybotrys chartarum (Toxic black mold).